Reading from the N-terminus, the 359-residue chain is Dual-specificity RNA methyltransferase RlmN (359 aa).

The active-site Proton acceptor is the Glu90. One can recognise a Radical SAM core domain in the interval 109-342 (HQERYTVCIS…CTIRESKGLD (234 aa)). A disulfide bridge connects residues Cys116 and Cys347. Residues Cys123, Cys127, and Cys130 each coordinate [4Fe-4S] cluster. S-adenosyl-L-methionine contacts are provided by residues 173-174 (GE), Ser205, 228-230 (SLH), and Asn304. The active-site S-methylcysteine intermediate is Cys347.

It belongs to the radical SAM superfamily. RlmN family. The cofactor is [4Fe-4S] cluster.

It is found in the cytoplasm. It catalyses the reaction adenosine(2503) in 23S rRNA + 2 reduced [2Fe-2S]-[ferredoxin] + 2 S-adenosyl-L-methionine = 2-methyladenosine(2503) in 23S rRNA + 5'-deoxyadenosine + L-methionine + 2 oxidized [2Fe-2S]-[ferredoxin] + S-adenosyl-L-homocysteine. The enzyme catalyses adenosine(37) in tRNA + 2 reduced [2Fe-2S]-[ferredoxin] + 2 S-adenosyl-L-methionine = 2-methyladenosine(37) in tRNA + 5'-deoxyadenosine + L-methionine + 2 oxidized [2Fe-2S]-[ferredoxin] + S-adenosyl-L-homocysteine. In terms of biological role, specifically methylates position 2 of adenine 2503 in 23S rRNA and position 2 of adenine 37 in tRNAs. m2A2503 modification seems to play a crucial role in the proofreading step occurring at the peptidyl transferase center and thus would serve to optimize ribosomal fidelity. The polypeptide is Dual-specificity RNA methyltransferase RlmN (Sulfurovum sp. (strain NBC37-1)).